A 782-amino-acid polypeptide reads, in one-letter code: Structure-specific endonuclease subunit SLX4 (782 aa).

2 disordered regions span residues 63–91 (TPKPVKVSRPGLRKTGSRKSKKNQSMSAM) and 359–425 (KEHE…KKSK). Residues 73–84 (GLRKTGSRKSKK) show a composition bias toward basic residues. A compositionally biased stretch (polar residues) spans 374–388 (PAQSLTQSQVPSSID).

The protein belongs to the SLX4 family. As to quaternary structure, forms a heterodimer with SLX1. In terms of processing, phosphorylated in response to DNA damage.

Its subcellular location is the nucleus. Regulatory subunit of the SLX1-SLX4 structure-specific endonuclease that resolves DNA secondary structures generated during DNA repair and recombination. Has endonuclease activity towards branched DNA substrates, introducing single-strand cuts in duplex DNA close to junctions with ss-DNA. The sequence is that of Structure-specific endonuclease subunit SLX4 from Scheffersomyces stipitis (strain ATCC 58785 / CBS 6054 / NBRC 10063 / NRRL Y-11545) (Yeast).